The following is a 1017-amino-acid chain: MLKIFEKLFGSKHEKDVKKIQPTIQRINELQRALASLSDEQLRQKGRELKQKVRGVLEPMELEQQKLFHQLDSPNISLDEAESVNNKLDDLAVAYETATASVLEEILPDTFALVKETCARLKGHTYNVMGRQFVWNMVPYDVQLIGGIVLHSGKIAEMQTGEGKTLVSTLPTFLNALTGRGVHVVTVNDYLAQRDKEWMEPLFAFHNLSVGVILTSMHPALRRAQYLCDITYGTNNELGFDYLRDNMANTPEEMVQRKFYYAIVDEVDSVLIDEARTPLIISGPVPNADNSKFQEIKPWIEQLVRAQQQQIAAWLGDAETRMKTNATDPEAGLALLRVKRGQPKNSRFIKMLSQQGVAKLVQITENEYLKDNSSRMHEVDDALFYAVDEKANTIDLTDKGRDFLSKLSHQDSDIFLLPDVGTEIATIESNAALSTNDKIQHKDALYRLFSDRSERLHNISQLLKAYSLFERDDEYVVQNGQVMIVDEFTGRILPGRRYSDGLHQAIEAKENVKIEGETQTMATITIQNFFRLYKKLAGMTGTAETEASEFYEIYKLDVVVIPTNASVVRKDMDDLVYKTRREKYNAIAQKVEELQKRGQPVLVGTTSVEVSETLSRMLRTRRIAHNVLNAKQNDREAEIVAEAGQKGTVTIATNMAGRGTDIKLGDGVRELGGLYILGSERHESRRIDRQLRGRAGRQGDPGESVFYVSLEDELMRLFGSDRVIAVMDRLGHEEGDVIEHSMITKSIERAQKKVEEQNFAIRKRLLEYDDVLNQQREVIYSRRKNGLLKERLTSDILDLLKDYSDTIVKKYHKDFDTAGLEEQLMRDLSIEFQLDRATFEREGIDAVVDKVYETALTFYRRKEESLPADIMCQIEKYAVLTVIDQRWREHLREIDSLREGINLRAYGQKDPLIEYKQEAFRLFITLLKEIEAETLSLAFKLFPIDPEEQQQIEERQRQSAIRQEKLVAQHDVAESFVGLNDDDEPLPAQPITTEQKPGRNDLCPCGSGKKYKACCGQ.

ATP-binding positions include glutamine 143, 161-165, and aspartate 661; that span reads GEGKT. The tract at residues 978-999 is disordered; sequence GLNDDDEPLPAQPITTEQKPGR. Cysteine 1003, cysteine 1005, cysteine 1014, and cysteine 1015 together coordinate Zn(2+).

Belongs to the SecA family. In terms of assembly, monomer and homodimer. Part of the essential Sec protein translocation apparatus which comprises SecA, SecYEG and auxiliary proteins SecDF. Other proteins may also be involved. It depends on Zn(2+) as a cofactor.

The protein localises to the cell inner membrane. Its subcellular location is the cytoplasm. The enzyme catalyses ATP + H2O + cellular proteinSide 1 = ADP + phosphate + cellular proteinSide 2.. Its function is as follows. Part of the Sec protein translocase complex. Interacts with the SecYEG preprotein conducting channel. Has a central role in coupling the hydrolysis of ATP to the transfer of proteins into and across the cell membrane, serving as an ATP-driven molecular motor driving the stepwise translocation of polypeptide chains across the membrane. This is Protein translocase subunit SecA 1 from Chlorobium chlorochromatii (strain CaD3).